We begin with the raw amino-acid sequence, 304 residues long: UDP-N-acetylenolpyruvoylglucosamine reductase (304 aa).

An FAD-binding PCMH-type domain is found at R33–G198. Residue R177 is part of the active site. The active-site Proton donor is S227. The active site involves E297.

The protein belongs to the MurB family. Requires FAD as cofactor.

It localises to the cytoplasm. The catalysed reaction is UDP-N-acetyl-alpha-D-muramate + NADP(+) = UDP-N-acetyl-3-O-(1-carboxyvinyl)-alpha-D-glucosamine + NADPH + H(+). The protein operates within cell wall biogenesis; peptidoglycan biosynthesis. Its function is as follows. Cell wall formation. In Clostridium perfringens (strain SM101 / Type A), this protein is UDP-N-acetylenolpyruvoylglucosamine reductase.